The chain runs to 147 residues: Large ribosomal subunit protein bL9 (147 aa).

This sequence belongs to the bacterial ribosomal protein bL9 family.

In terms of biological role, binds to the 23S rRNA. In Bacteroides thetaiotaomicron (strain ATCC 29148 / DSM 2079 / JCM 5827 / CCUG 10774 / NCTC 10582 / VPI-5482 / E50), this protein is Large ribosomal subunit protein bL9.